The primary structure comprises 953 residues: Isoleucine--tRNA ligase (953 aa).

A 'HIGH' region motif is present at residues 58-68 (PYANGSIHIGH). Residue E577 coordinates L-isoleucyl-5'-AMP. The 'KMSKS' region motif lies at 618–622 (KMSKS). K621 lines the ATP pocket. Residues C916, C919, C936, and C939 each coordinate Zn(2+).

It belongs to the class-I aminoacyl-tRNA synthetase family. IleS type 1 subfamily. In terms of assembly, monomer. Zn(2+) is required as a cofactor.

The protein resides in the cytoplasm. It carries out the reaction tRNA(Ile) + L-isoleucine + ATP = L-isoleucyl-tRNA(Ile) + AMP + diphosphate. Catalyzes the attachment of isoleucine to tRNA(Ile). As IleRS can inadvertently accommodate and process structurally similar amino acids such as valine, to avoid such errors it has two additional distinct tRNA(Ile)-dependent editing activities. One activity is designated as 'pretransfer' editing and involves the hydrolysis of activated Val-AMP. The other activity is designated 'posttransfer' editing and involves deacylation of mischarged Val-tRNA(Ile). The polypeptide is Isoleucine--tRNA ligase (Aeromonas hydrophila subsp. hydrophila (strain ATCC 7966 / DSM 30187 / BCRC 13018 / CCUG 14551 / JCM 1027 / KCTC 2358 / NCIMB 9240 / NCTC 8049)).